The following is an 82-amino-acid chain: ATP synthase subunit c, chloroplastic (82 aa).

The next 2 helical transmembrane spans lie at 4 to 24 and 57 to 77; these read IISA…AIGP and LAFM…LLFA.

Belongs to the ATPase C chain family. As to quaternary structure, F-type ATPases have 2 components, F(1) - the catalytic core - and F(0) - the membrane proton channel. F(1) has five subunits: alpha(3), beta(3), gamma(1), delta(1), epsilon(1). F(0) has four main subunits: a(1), b(1), b'(1) and c(10-14). The alpha and beta chains form an alternating ring which encloses part of the gamma chain. F(1) is attached to F(0) by a central stalk formed by the gamma and epsilon chains, while a peripheral stalk is formed by the delta, b and b' chains.

It localises to the plastid. It is found in the chloroplast thylakoid membrane. Functionally, f(1)F(0) ATP synthase produces ATP from ADP in the presence of a proton or sodium gradient. F-type ATPases consist of two structural domains, F(1) containing the extramembraneous catalytic core and F(0) containing the membrane proton channel, linked together by a central stalk and a peripheral stalk. During catalysis, ATP synthesis in the catalytic domain of F(1) is coupled via a rotary mechanism of the central stalk subunits to proton translocation. Its function is as follows. Key component of the F(0) channel; it plays a direct role in translocation across the membrane. A homomeric c-ring of between 10-14 subunits forms the central stalk rotor element with the F(1) delta and epsilon subunits. The sequence is that of ATP synthase subunit c, chloroplastic from Heterosigma akashiwo (strain NIES-293 / 8280G21-1).